Consider the following 391-residue polypeptide: MTNNTKTITLNLGPQHPATHGVLRLILEMDGEIVNNADPHIGLLHRGTEKLIEHKTYLQAIPYFDRLDYVSPMCQEHAFALAVESLLECEVPRRAQFIRVLFSELTRILNHTLNIGSQALDIGATTPLLWLFEEREKIMEFYERVSGSRMHSNYFRPGGVAEDLPDGLLEDIDKFIDQFPPKLHDIESLLNENRLWKQRLVDIGVVSQKEAMDWGFSGPMLRGSGIAWDLRKSNPYDVYDEMEFEVPIGKNGDCYDRYFVRMLEMYESIKIIKQCIEKMPKGAVKTNDPKLTPPTRAKMKESMEAMIHHFKLYTAGYDVPAGETYKAVEAPKGEFGVYLYSQGVNIPYRCRIKSPGFAHLQGLDFMSKGHLMADVITIIATLDIVFGEIDR.

Belongs to the complex I 49 kDa subunit family. As to quaternary structure, NDH-1 is composed of 14 different subunits. Subunits NuoB, C, D, E, F, and G constitute the peripheral sector of the complex.

It is found in the cell inner membrane. It catalyses the reaction a quinone + NADH + 5 H(+)(in) = a quinol + NAD(+) + 4 H(+)(out). NDH-1 shuttles electrons from NADH, via FMN and iron-sulfur (Fe-S) centers, to quinones in the respiratory chain. The immediate electron acceptor for the enzyme in this species is believed to be ubiquinone. Couples the redox reaction to proton translocation (for every two electrons transferred, four hydrogen ions are translocated across the cytoplasmic membrane), and thus conserves the redox energy in a proton gradient. This Rickettsia akari (strain Hartford) protein is NADH-quinone oxidoreductase subunit D.